The following is a 388-amino-acid chain: Succinate--CoA ligase [ADP-forming] subunit beta (388 aa).

An ATP-grasp domain is found at 9–244; it reads KGVLSSFGVT…PDEYAAEELE (236 aa). Residues lysine 46, 53-55, glutamate 99, valine 102, and glutamate 107 each bind ATP; that span reads GRG. 2 residues coordinate Mg(2+): asparagine 199 and aspartate 213. Residues asparagine 264 and 320–322 contribute to the substrate site; that span reads GIM.

Belongs to the succinate/malate CoA ligase beta subunit family. In terms of assembly, heterotetramer of two alpha and two beta subunits. Mg(2+) is required as a cofactor.

It carries out the reaction succinate + ATP + CoA = succinyl-CoA + ADP + phosphate. The catalysed reaction is GTP + succinate + CoA = succinyl-CoA + GDP + phosphate. The protein operates within carbohydrate metabolism; tricarboxylic acid cycle; succinate from succinyl-CoA (ligase route): step 1/1. Its function is as follows. Succinyl-CoA synthetase functions in the citric acid cycle (TCA), coupling the hydrolysis of succinyl-CoA to the synthesis of either ATP or GTP and thus represents the only step of substrate-level phosphorylation in the TCA. The beta subunit provides nucleotide specificity of the enzyme and binds the substrate succinate, while the binding sites for coenzyme A and phosphate are found in the alpha subunit. The chain is Succinate--CoA ligase [ADP-forming] subunit beta from Anaplasma marginale (strain St. Maries).